A 474-amino-acid chain; its full sequence is Cytochrome c biogenesis protein CcsB (474 aa).

A run of 3 helical transmembrane segments spans residues 36 to 56, 96 to 116, and 182 to 202; these read LKLA…GTVI, SWWF…CTFR, and VGPI…MIGA.

The protein belongs to the Ccs1/CcsB family. May interact with CcsA.

The protein localises to the cell inner membrane. Required during biogenesis of c-type cytochromes (cytochrome c6 and cytochrome f) at the step of heme attachment. The protein is Cytochrome c biogenesis protein CcsB of Gloeobacter violaceus (strain ATCC 29082 / PCC 7421).